A 201-amino-acid polypeptide reads, in one-letter code: Glycolipid transfer protein (201 aa).

A glycolipid transfer protein homology domain region spans residues 28–168 (IATTQFLEAC…KDFYAKLGDD (141 aa)).

In terms of biological role, cargo transport protein that plays a key role in transport and secretion of liamocins, glycolipids (also called heavy oils) composed of a single mannitol or arabitol headgroup linked to either three, four or even six 3,5-dihydroxydecanoic ester tail-groups. This chain is Glycolipid transfer protein, found in Aureobasidium melanogenum (Aureobasidium pullulans var. melanogenum).